Reading from the N-terminus, the 358-residue chain is Cytoplasmic dynein 2 light intermediate chain 1 (358 aa).

Disordered regions lie at residues 1–35 and 307–358; these read MPKV…EDAH and ESTR…ALDP. The segment covering 24-33 has biased composition (acidic residues); the sequence is TDEEEAEEED. Composition is skewed to basic and acidic residues over residues 307–320 and 333–349; these read ESTR…DPVK and RAQK…EQAK.

This sequence belongs to the dynein light intermediate chain family. Light intermediate chain of the cytoplasmic dynein complex 2, a multisubunit complex composed at least of eleven different proteins. The cytoplasmic dynein 2 complex consists of two catalytic heavy chains (HCs) and a number of non-catalytic subunits presented by intermediate chains (ICs), light intermediate chains (LICs) and light chains (LCs). Among them, a heavy chain (DYNC2H1), two intermediate chains (DYNC2I2 and DYNC2I1), a light intermediate chain (DYNC2LI1), and a light chain (DYNLT2B) are unique to the dynein-2 complex, but a subset of light chains are also shared by dynein-1 and dynein-2 complexes. Dynein-2 complex is built around two copies of cytoplasmic dynein 2 heavy chain 1 (DYNC2H1). The C-terminal region forms the motor domain, which converts the energy from ATP hydrolysis into movement. Its N-terminal region forms the tail, an extended structure that binds the other subunits and holds the two heavy chains in a homodimer.

It is found in the cytoplasm. The protein localises to the cell projection. Its subcellular location is the cilium. The protein resides in the cytoskeleton. It localises to the cilium basal body. It is found in the cilium axoneme. The protein localises to the microtubule organizing center. Its subcellular location is the centrosome. Functionally, acts as one of several non-catalytic accessory components of the cytoplasmic dynein 2 complex (dynein-2 complex), a motor protein complex that drives the movement of cargos along microtubules within cilia and flagella in concert with the intraflagellar transport (IFT) system, facilitating the assembly of these organelles. In Danio rerio (Zebrafish), this protein is Cytoplasmic dynein 2 light intermediate chain 1 (dync2li1).